We begin with the raw amino-acid sequence, 93 residues long: Protein NONRESPONDING TO OXYLIPINS 2, mitochondrial (93 aa).

The transit peptide at 1–27 (MASRCRSLSKPAFSAFRSAMNKPSIRP) directs the protein to the mitochondrion.

In terms of tissue distribution, expressed in cotyledons, roots and flowers.

It is found in the mitochondrion. Functionally, essential for mitochondrial morphology, functionality and distribution. Contributes to 9-lipoxygenase (9-LOX)-derived oxylipin synthesis, but not to brassinosteroids (BRs) signaling. Required for waving-inducing oxylipin 9-hydroxyoctadecatrienoic acid and derivatives (e.g. 9-HOT, 2-HOE, 13-HOT, 13-HOD, 13-KOD, 12,13-KHOD, 9-HOT, 9-HOD, 9-KOT, 9-KOD and 9,10-KHOE)-mediated root development regulation, including callose deposition, root waving and lateral roots formation. Involved in basal plant defense toward pathogenic bacteria (e.g. Pseudomonas syringae pv tomato), both in compatible (e.g. Pst DC3000) and incompatible (e.g. Pst DC3000 avrRPM1) interactions, as well as against obligate biotrophic pathogenic fungi (e.g. Golovinomyces cichoracearum), probably via the promotion of callose deposition in the cell wall. Confers sensitivity to the herbicide isoxaben, a herbicide inhibiting cellulose synthesis and altering the cell wall. The polypeptide is Protein NONRESPONDING TO OXYLIPINS 2, mitochondrial (Arabidopsis thaliana (Mouse-ear cress)).